Consider the following 378-residue polypeptide: Flap endonuclease 1 (378 aa).

Positions 1-102 (MGIHGLAKLI…GELAKRSERR (102 aa)) are N-domain. Position 19 is a symmetric dimethylarginine; by PRMT5 (R19). Mg(2+) is bound at residue D34. Residues R47 and R69 each contribute to the DNA site. The residue at position 78 (K78) is an N6-acetyllysine. D84 serves as a coordination point for Mg(2+). R98 and R102 each carry symmetric dimethylarginine; by PRMT5. Residues 120–251 (EVEKFTKRLV…KRAVDLIQKH (132 aa)) are I-domain. E156, E158, D177, and D179 together coordinate Mg(2+). E156 serves as a coordination point for DNA. A Phosphoserine; by CDK2 modification is found at S185. R190 is subject to Symmetric dimethylarginine; by PRMT5. S195 is subject to Phosphoserine. DNA contacts are provided by G229 and D231. Position 231 (D231) interacts with Mg(2+). 3 positions are modified to phosphoserine: S253, S291, and S333. Residues 325 to 378 (RLSKSRQGSTQGRLDDFFKVTGSLSSAKRKEPEPKGPAKKKAKTGGAGKFRRGK) form a disordered region. T334 is subject to Phosphothreonine. Residues 334–342 (TQGRLDDFF) form an interaction with PCNA region. N6-acetyllysine is present on residues K352, K373, and K378. Positions 361–378 (PAKKKAKTGGAGKFRRGK) are enriched in basic residues.

Belongs to the XPG/RAD2 endonuclease family. FEN1 subfamily. Interacts with PCNA. Three molecules of FEN1 bind to one PCNA trimer with each molecule binding to one PCNA monomer. PCNA stimulates the nuclease activity without altering cleavage specificity. The C-terminal domain binds EP300; can bind simultaneously to both PCNA and EP300. Interacts with DDX11; this interaction is direct and increases flap endonuclease activity of FEN1. Interacts with WDR4; regulating its endonuclease activity. Interacts with POLB. Requires Mg(2+) as cofactor. In terms of processing, acetylated by EP300. Acetylation inhibits both endonuclease and exonuclease activity. Acetylation also reduces DNA-binding activity but does not affect interaction with PCNA or EP300. Phosphorylation upon DNA damage induces relocalization to the nuclear plasma. Phosphorylation at Ser-185 by CDK2 occurs during late S-phase and results in dissociation from PCNA. Post-translationally, methylation at Arg-190 by PRMT5 impedes Ser-185 phosphorylation and increases interaction with PCNA.

The protein localises to the nucleus. The protein resides in the nucleolus. Its subcellular location is the nucleoplasm. It localises to the mitochondrion. Structure-specific nuclease with 5'-flap endonuclease and 5'-3' exonuclease activities involved in DNA replication and repair. During DNA replication, cleaves the 5'-overhanging flap structure that is generated by displacement synthesis when DNA polymerase encounters the 5'-end of a downstream Okazaki fragment. It enters the flap from the 5'-end and then tracks to cleave the flap base, leaving a nick for ligation. Also involved in the long patch base excision repair (LP-BER) pathway, by cleaving within the apurinic/apyrimidinic (AP) site-terminated flap. Acts as a genome stabilization factor that prevents flaps from equilibrating into structures that lead to duplications and deletions. Also possesses 5'-3' exonuclease activity on nicked or gapped double-stranded DNA, and exhibits RNase H activity. Also involved in replication and repair of rDNA and in repairing mitochondrial DNA. This chain is Flap endonuclease 1, found in Mus musculus (Mouse).